The sequence spans 119 residues: Ribonuclease P protein component (119 aa).

It belongs to the RnpA family. As to quaternary structure, consists of a catalytic RNA component (M1 or rnpB) and a protein subunit.

It carries out the reaction Endonucleolytic cleavage of RNA, removing 5'-extranucleotides from tRNA precursor.. Its function is as follows. RNaseP catalyzes the removal of the 5'-leader sequence from pre-tRNA to produce the mature 5'-terminus. It can also cleave other RNA substrates such as 4.5S RNA. The protein component plays an auxiliary but essential role in vivo by binding to the 5'-leader sequence and broadening the substrate specificity of the ribozyme. The protein is Ribonuclease P protein component of Histophilus somni (strain 129Pt) (Haemophilus somnus).